Consider the following 291-residue polypeptide: Transmembrane protein 41B (291 aa).

The interval 1–38 (MAKGRVAERSQMGADHTTPVGDGAAGTRGPAAPGSRDY) is disordered. A Phosphothreonine modification is found at T18. Over residues 21–34 (GDGAAGTRGPAAPG) the composition is skewed to low complexity. The residue at position 35 (S35) is a Phosphoserine. 6 helical membrane-spanning segments follow: residues 52–72 (MSLL…FLVY), 109–129 (FYVQ…TFAI), 147–169 (LALF…LSYL), 197–217 (LINY…FINI), 225–245 (PLKV…FVAI), and 262–282 (SWNS…PAIF). The interval 140–251 (GFLYPFPLAL…FVAIKAGTTL (112 aa)) is VTT domain; required for its function in autophagy.

It belongs to the TMEM41 family. In terms of assembly, interacts with VMP1. Interacts with COPA, COPB1, VDAC1 and ERLIN2. Interacts with ATG2A. Interacts with SURF4.

The protein localises to the endoplasmic reticulum membrane. It localises to the endomembrane system. The catalysed reaction is a 1,2-diacyl-sn-glycero-3-phospho-L-serine(in) = a 1,2-diacyl-sn-glycero-3-phospho-L-serine(out). It catalyses the reaction cholesterol(in) = cholesterol(out). It carries out the reaction a 1,2-diacyl-sn-glycero-3-phosphocholine(in) = a 1,2-diacyl-sn-glycero-3-phosphocholine(out). The enzyme catalyses a 1,2-diacyl-sn-glycero-3-phosphoethanolamine(in) = a 1,2-diacyl-sn-glycero-3-phosphoethanolamine(out). Its function is as follows. Phospholipid scramblase involved in lipid homeostasis and membrane dynamics processes. Has phospholipid scramblase activity toward cholesterol and phosphatidylserine, as well as phosphatidylethanolamine and phosphatidylcholine. Required for autophagosome formation: participates in early stages of autophagosome biogenesis at the endoplasmic reticulum (ER) membrane by reequilibrating the leaflets of the ER as lipids are extracted by ATG2 (ATG2A or ATG2B) to mediate autophagosome assembly. In addition to autophagy, involved in other processes in which phospholipid scramblase activity is required. Required for normal motor neuron development. This Pongo abelii (Sumatran orangutan) protein is Transmembrane protein 41B.